A 298-amino-acid polypeptide reads, in one-letter code: Homoserine kinase (298 aa).

ATP is bound at residue 83–93 (PVSRGLGSSST).

It belongs to the GHMP kinase family. Homoserine kinase subfamily.

The protein localises to the cytoplasm. The enzyme catalyses L-homoserine + ATP = O-phospho-L-homoserine + ADP + H(+). It functions in the pathway amino-acid biosynthesis; L-threonine biosynthesis; L-threonine from L-aspartate: step 4/5. Catalyzes the ATP-dependent phosphorylation of L-homoserine to L-homoserine phosphate. The chain is Homoserine kinase from Clostridium beijerinckii (strain ATCC 51743 / NCIMB 8052) (Clostridium acetobutylicum).